We begin with the raw amino-acid sequence, 303 residues long: Pseudouridine-5'-phosphate glycosidase (303 aa).

Glu23 acts as the Proton donor in catalysis. Substrate-binding residues include Lys85 and Val105. Asp137 serves as a coordination point for Mn(2+). Substrate is bound at residue 139-141 (SQD). Lys158 acts as the Nucleophile in catalysis.

It belongs to the pseudouridine-5'-phosphate glycosidase family. In terms of assembly, homotrimer. It depends on Mn(2+) as a cofactor.

It catalyses the reaction D-ribose 5-phosphate + uracil = psi-UMP + H2O. Functionally, catalyzes the reversible cleavage of pseudouridine 5'-phosphate (PsiMP) to ribose 5-phosphate and uracil. Functions biologically in the cleavage direction, as part of a pseudouridine degradation pathway. The protein is Pseudouridine-5'-phosphate glycosidase of Myxococcus xanthus (strain DK1622).